Here is a 446-residue protein sequence, read N- to C-terminus: 3-phosphoshikimate 1-carboxyvinyltransferase (446 aa).

3-phosphoshikimate contacts are provided by Lys27, Ser28, and Arg32. Lys27 lines the phosphoenolpyruvate pocket. The phosphoenolpyruvate site is built by Gly100 and Arg128. Residues Ser177, Gln179, Asp330, and Lys357 each contribute to the 3-phosphoshikimate site. Residue Gln179 coordinates phosphoenolpyruvate. Asp330 functions as the Proton acceptor in the catalytic mechanism. Residues Arg361 and Arg406 each contribute to the phosphoenolpyruvate site.

The protein belongs to the EPSP synthase family. In terms of assembly, monomer.

The protein localises to the cytoplasm. It carries out the reaction 3-phosphoshikimate + phosphoenolpyruvate = 5-O-(1-carboxyvinyl)-3-phosphoshikimate + phosphate. Its pathway is metabolic intermediate biosynthesis; chorismate biosynthesis; chorismate from D-erythrose 4-phosphate and phosphoenolpyruvate: step 6/7. Its function is as follows. Catalyzes the transfer of the enolpyruvyl moiety of phosphoenolpyruvate (PEP) to the 5-hydroxyl of shikimate-3-phosphate (S3P) to produce enolpyruvyl shikimate-3-phosphate and inorganic phosphate. In Sphingopyxis alaskensis (strain DSM 13593 / LMG 18877 / RB2256) (Sphingomonas alaskensis), this protein is 3-phosphoshikimate 1-carboxyvinyltransferase.